We begin with the raw amino-acid sequence, 158 residues long: 3-hydroxyacyl-[acyl-carrier-protein] dehydratase FabZ (158 aa).

His-60 is a catalytic residue.

It belongs to the thioester dehydratase family. FabZ subfamily.

The protein resides in the cytoplasm. The catalysed reaction is a (3R)-hydroxyacyl-[ACP] = a (2E)-enoyl-[ACP] + H2O. In terms of biological role, involved in unsaturated fatty acids biosynthesis. Catalyzes the dehydration of short chain beta-hydroxyacyl-ACPs and long chain saturated and unsaturated beta-hydroxyacyl-ACPs. This Zymomonas mobilis subsp. mobilis (strain ATCC 31821 / ZM4 / CP4) protein is 3-hydroxyacyl-[acyl-carrier-protein] dehydratase FabZ.